A 219-amino-acid polypeptide reads, in one-letter code: Histidinol-phosphate aminotransferase (219 aa).

It belongs to the class-II pyridoxal-phosphate-dependent aminotransferase family. Histidinol-phosphate aminotransferase subfamily. In terms of assembly, homodimer. It depends on pyridoxal 5'-phosphate as a cofactor.

It catalyses the reaction L-histidinol phosphate + 2-oxoglutarate = 3-(imidazol-4-yl)-2-oxopropyl phosphate + L-glutamate. The protein operates within amino-acid biosynthesis; L-histidine biosynthesis; L-histidine from 5-phospho-alpha-D-ribose 1-diphosphate: step 7/9. This is Histidinol-phosphate aminotransferase (hisC) from Mycolicibacterium smegmatis (Mycobacterium smegmatis).